We begin with the raw amino-acid sequence, 252 residues long: 2-succinyl-6-hydroxy-2,4-cyclohexadiene-1-carboxylate synthase (252 aa).

Belongs to the AB hydrolase superfamily. MenH family. Monomer.

The catalysed reaction is 5-enolpyruvoyl-6-hydroxy-2-succinyl-cyclohex-3-ene-1-carboxylate = (1R,6R)-6-hydroxy-2-succinyl-cyclohexa-2,4-diene-1-carboxylate + pyruvate. The protein operates within quinol/quinone metabolism; 1,4-dihydroxy-2-naphthoate biosynthesis; 1,4-dihydroxy-2-naphthoate from chorismate: step 3/7. It participates in quinol/quinone metabolism; menaquinone biosynthesis. Its function is as follows. Catalyzes a proton abstraction reaction that results in 2,5-elimination of pyruvate from 2-succinyl-5-enolpyruvyl-6-hydroxy-3-cyclohexene-1-carboxylate (SEPHCHC) and the formation of 2-succinyl-6-hydroxy-2,4-cyclohexadiene-1-carboxylate (SHCHC). The protein is 2-succinyl-6-hydroxy-2,4-cyclohexadiene-1-carboxylate synthase of Escherichia coli O7:K1 (strain IAI39 / ExPEC).